Here is a 432-residue protein sequence, read N- to C-terminus: Glutamate-1-semialdehyde 2,1-aminomutase 1 (432 aa).

Lysine 268 bears the N6-(pyridoxal phosphate)lysine mark.

The protein belongs to the class-III pyridoxal-phosphate-dependent aminotransferase family. HemL subfamily. As to quaternary structure, homodimer. Pyridoxal 5'-phosphate serves as cofactor.

The protein localises to the cytoplasm. It carries out the reaction (S)-4-amino-5-oxopentanoate = 5-aminolevulinate. It functions in the pathway porphyrin-containing compound metabolism; protoporphyrin-IX biosynthesis; 5-aminolevulinate from L-glutamyl-tRNA(Glu): step 2/2. This is Glutamate-1-semialdehyde 2,1-aminomutase 1 from Bacillus mycoides (strain KBAB4) (Bacillus weihenstephanensis).